We begin with the raw amino-acid sequence, 232 residues long: Enolase-phosphatase E1 (232 aa).

It belongs to the HAD-like hydrolase superfamily. MasA/MtnC family. As to quaternary structure, monomer. Requires Mg(2+) as cofactor.

It catalyses the reaction 5-methylsulfanyl-2,3-dioxopentyl phosphate + H2O = 1,2-dihydroxy-5-(methylsulfanyl)pent-1-en-3-one + phosphate. Its pathway is amino-acid biosynthesis; L-methionine biosynthesis via salvage pathway; L-methionine from S-methyl-5-thio-alpha-D-ribose 1-phosphate: step 3/6. The protein operates within amino-acid biosynthesis; L-methionine biosynthesis via salvage pathway; L-methionine from S-methyl-5-thio-alpha-D-ribose 1-phosphate: step 4/6. In terms of biological role, bifunctional enzyme that catalyzes the enolization of 2,3-diketo-5-methylthiopentyl-1-phosphate (DK-MTP-1-P) into the intermediate 2-hydroxy-3-keto-5-methylthiopentenyl-1-phosphate (HK-MTPenyl-1-P), which is then dephosphorylated to form the acireductone 1,2-dihydroxy-3-keto-5-methylthiopentene (DHK-MTPene). This Nocardia farcinica (strain IFM 10152) protein is Enolase-phosphatase E1.